Reading from the N-terminus, the 674-residue chain is Protein asunder (674 aa).

Residues 516–538 (HKAKDQYRLLYRELEQLIQLNAS) are a coiled coil. The Nuclear localization signal (NLS) motif lies at 601–607 (LKASKRR).

It belongs to the Integrator subunit 13 family. In terms of assembly, belongs to the multiprotein complex Integrator, at least composed of IntS1, IntS2, IntS3, IntS4, omd/IntS5, IntS6, defl/IntS7, IntS8, IntS9, IntS10, IntS11, IntS12, asun/IntS13, IntS14 and IntS15. The core complex associates with protein phosphatase 2A subunits mts/PP2A and Pp2A-29B, to form the Integrator-PP2A (INTAC) complex. In terms of processing, phosphorylated.

It is found in the nucleus. The protein localises to the cytoplasm. The protein resides in the perinuclear region. Its function is as follows. Component of the integrator complex, a multiprotein complex that terminates RNA polymerase II (Pol II) transcription in the promoter-proximal region of genes. The integrator complex provides a quality checkpoint during transcription elongation by driving premature transcription termination of transcripts that are unfavorably configured for transcriptional elongation: the complex terminates transcription by (1) catalyzing dephosphorylation of the C-terminal domain (CTD) of Pol II subunit Polr2A/Rbp1 and Spt5, and (2) degrading the exiting nascent RNA transcript via endonuclease activity. The integrator complex is also involved in the 3'-end processing of the U7 snRNA, and also the spliceosomal snRNAs U1, U2, U4 and U5. This Drosophila persimilis (Fruit fly) protein is Protein asunder (asun).